The chain runs to 503 residues: Probable cytosol aminopeptidase (503 aa).

Mn(2+) is bound by residues Lys-274 and Asp-279. Lys-286 is an active-site residue. Mn(2+) contacts are provided by Asp-297, Asp-356, and Glu-358. Arg-360 is an active-site residue.

It belongs to the peptidase M17 family. Mn(2+) is required as a cofactor.

Its subcellular location is the cytoplasm. It catalyses the reaction Release of an N-terminal amino acid, Xaa-|-Yaa-, in which Xaa is preferably Leu, but may be other amino acids including Pro although not Arg or Lys, and Yaa may be Pro. Amino acid amides and methyl esters are also readily hydrolyzed, but rates on arylamides are exceedingly low.. The enzyme catalyses Release of an N-terminal amino acid, preferentially leucine, but not glutamic or aspartic acids.. Functionally, presumably involved in the processing and regular turnover of intracellular proteins. Catalyzes the removal of unsubstituted N-terminal amino acids from various peptides. This is Probable cytosol aminopeptidase from Burkholderia orbicola (strain MC0-3).